The sequence spans 421 residues: Isocitrate dehydrogenase [NADP], mitochondrial (421 aa).

The N-terminal 8 residues, 1–8 (ARAAARHY), are a transit peptide targeting the mitochondrion. Residues K14, K17, K36, and K38 each carry the N6-acetyllysine modification. Residues K49 and K75 each carry the N6-acetyllysine; alternate modification. N6-succinyllysine; alternate occurs at positions 49 and 75. Residues 84–86 (TIT) and R91 contribute to the NADP(+) site. Position 86 (T86) interacts with D-threo-isocitrate. D-threo-isocitrate-binding positions include 103–109 (SPNGTIR) and R118. K124 is subject to N6-acetyllysine. N6-acetyllysine; alternate is present on K135. K135 carries the N6-succinyllysine; alternate modification. R141 is a binding site for D-threo-isocitrate. 2 positions are modified to N6-acetyllysine; alternate: K149 and K162. Residues K149 and K162 each carry the N6-succinyllysine; alternate modification. K168 bears the N6-acetyllysine mark. N6-acetyllysine; alternate is present on K225. The residue at position 225 (K225) is an N6-succinyllysine; alternate. N6-acetyllysine is present on residues K232, K241, K244, and K249. K251 is modified (N6-acetyllysine; alternate). Residue K251 is modified to N6-succinyllysine; alternate. Residue D260 participates in Mn(2+) binding. Residue K268 coordinates NADP(+). D283 provides a ligand contact to Mn(2+). Residues 318 to 323 (GTVTRH) and N336 each bind NADP(+). Residue K353 is modified to N6-acetyllysine; alternate. K353 is modified (N6-succinyllysine; alternate). N6-acetyllysine is present on residues K369, K382, and K411.

This sequence belongs to the isocitrate and isopropylmalate dehydrogenases family. As to quaternary structure, homodimer. The cofactor is Mg(2+). Mn(2+) serves as cofactor. Acetylation at Lys-382 dramatically reduces catalytic activity. Deacetylated by SIRT3.

The protein resides in the mitochondrion. It carries out the reaction D-threo-isocitrate + NADP(+) = 2-oxoglutarate + CO2 + NADPH. Its function is as follows. Plays a role in intermediary metabolism and energy production. It may tightly associate or interact with the pyruvate dehydrogenase complex. The protein is Isocitrate dehydrogenase [NADP], mitochondrial (IDH2) of Sus scrofa (Pig).